A 680-amino-acid chain; its full sequence is Dihydroxyacetone phosphate acyltransferase (680 aa).

Phosphoserine is present on residues Ser-12 and Ser-17. The HXXXXD motif motif lies at 162-167; the sequence is HRSYID. N6-acetyllysine is present on Lys-643. Positions 678–680 match the Microbody targeting signal motif; sequence AKL.

Belongs to the GPAT/DAPAT family. As to quaternary structure, part of a heterotrimeric complex composed of GNPAT, AGPS and a modified form of GNPAT.

It is found in the peroxisome membrane. It catalyses the reaction dihydroxyacetone phosphate + an acyl-CoA = a 1-acylglycerone 3-phosphate + CoA. The enzyme catalyses dihydroxyacetone phosphate + hexadecanoyl-CoA = 1-hexadecanoylglycerone 3-phosphate + CoA. It functions in the pathway membrane lipid metabolism; glycerophospholipid metabolism. Functionally, dihydroxyacetonephosphate acyltransferase catalyzing the first step in the biosynthesis of plasmalogens, a subset of phospholipids that differ from other glycerolipids by having an alkyl chain attached through a vinyl ether linkage at the sn-1 position of the glycerol backbone, and which unique physical properties have an impact on various aspects of cell signaling and membrane biology. The polypeptide is Dihydroxyacetone phosphate acyltransferase (Homo sapiens (Human)).